The primary structure comprises 712 residues: Nucleolin (712 aa).

The segment at 1 to 305 (MVKLAKAGKN…KKQKVEGTEP (305 aa)) is disordered. An N6-acetyllysine mark is found at K9, K15, and K16. The span at 24–43 (VEEDSEDEEMSEDEEDDSSG) shows a compositional bias: acidic residues. Phosphoserine is present on residues S28, S34, S41, and S42. The span at 56–107 (AAATSAKKVVVSPTKKVAVATPAKKAAVTPGKKAAATPAKKTVTPAKAVTTP) shows a compositional bias: low complexity. Repeat 1 spans residues 58–65 (ATSAKKVV). Residues 58-135 (ATSAKKVVVS…GAAIPAKGAK (78 aa)) form an 8 X 8 AA tandem repeats of X-T-P-X-K-K-X-X region. A Phosphoserine modification is found at S67. Phosphothreonine occurs at positions 69, 76, 84, and 92. Tandem repeats lie at residues 75 to 82 (ATPAKKAA), 83 to 90 (VTPGKKAA), and 91 to 98 (ATPAKKTV). K96 is subject to N6-acetyllysine. A Phosphothreonine modification is found at T99. The stretch at 99–104 (TPAKAV) is one 5; truncated repeat. Residue K102 is modified to N6-acetyllysine. Residues 105 to 112 (TTPGKKGA) form repeat 6. T106 is subject to Phosphothreonine. K109 carries the N6-acetyllysine modification. T113 bears the Phosphothreonine mark. An N6-acetyllysine modification is found at K116. 2 consecutive repeat copies span residues 120 to 127 (ATPGKKGA) and 128 to 135 (AIPAKGAK). T121 is subject to Phosphothreonine. The segment covering 122–137 (PGKKGAAIPAKGAKNG) has biased composition (low complexity). Position 124 is an N6-acetyllysine (K124). Phosphoserine is present on residues S145 and S153. Residues 145-171 (SDEEEEDDSEEDEDDDEDEDEDEDEIE) are compositionally biased toward acidic residues. Residues 172-183 (PAAMKAAAAAPA) show a composition bias toward low complexity. 2 positions are modified to phosphoserine: S184 and S206. A compositionally biased stretch (acidic residues) spans 184 to 211 (SEDEDDEDDEDDEDEDDDEEDDSEEEAM). T214 is modified (phosphothreonine). Residues 234–274 (EDEDEEEDDEDEDDDDDDDDDDEDDEDEDDEEEEEEEEEEP) are compositionally biased toward acidic residues. Residues 275–302 (VKEAPGKRKKEMAKQKAAPEAKKQKVEG) are compositionally biased toward basic and acidic residues. A Glycyl lysine isopeptide (Lys-Gly) (interchain with G-Cter in SUMO1); alternate cross-link involves residue K299. A Glycyl lysine isopeptide (Lys-Gly) (interchain with G-Cter in SUMO2); alternate cross-link involves residue K299. Position 303 is a phosphothreonine (T303). RRM domains follow at residues 309 to 385 (FNLF…KPKG) and 395 to 468 (RTLL…YTGE). N6-acetyllysine is present on K320. K326 participates in a covalent cross-link: Glycyl lysine isopeptide (Lys-Gly) (interchain with G-Cter in SUMO1); alternate. A Glycyl lysine isopeptide (Lys-Gly) (interchain with G-Cter in SUMO2); alternate cross-link involves residue K326. K350 bears the N6-acetyllysine mark. A Phosphoserine modification is found at S358. Phosphothreonine is present on T369. A Glycyl lysine isopeptide (Lys-Gly) (interchain with G-Cter in SUMO2) cross-link involves residue K372. K379 is covalently cross-linked (Glycyl lysine isopeptide (Lys-Gly) (interchain with G-Cter in SUMO2); alternate). K379 carries the post-translational modification N6-acetyllysine; alternate. An N6-acetyllysine mark is found at K400 and K405. T407 is subject to Phosphothreonine. Residues K429 and K446 each carry the N6-acetyllysine modification. A phosphoserine mark is found at S460 and S462. N6-acetyllysine is present on residues K469 and K479. One can recognise an RRM 3 domain in the interval 488-562 (KTLVLSNLSY…RAIRLELQGP (75 aa)). K515 participates in a covalent cross-link: Glycyl lysine isopeptide (Lys-Gly) (interchain with G-Cter in SUMO2); alternate. K515 bears the N6-acetyllysine; alternate mark. K523 bears the N6-acetyllysine mark. Position 565 is a phosphoserine (S565). An N6-acetyllysine modification is found at K574. In terms of domain architecture, RRM 4 spans 574-649 (KTLFVKGLSE…NKVTLDWAKP (76 aa)). K579 is covalently cross-linked (Glycyl lysine isopeptide (Lys-Gly) (interchain with G-Cter in SUMO2); alternate). K579 bears the N6-acetyllysine; alternate mark. S582 carries the post-translational modification Phosphoserine. K591 participates in a covalent cross-link: Glycyl lysine isopeptide (Lys-Gly) (interchain with G-Cter in SUMO1); alternate. Residue K591 forms a Glycyl lysine isopeptide (Lys-Gly) (interchain with G-Cter in SUMO2); alternate linkage. A phosphoserine mark is found at S593 and S621. Residue K626 forms a Glycyl lysine isopeptide (Lys-Gly) (interchain with G-Cter in SUMO2) linkage. Residues 642 to 712 (VTLDWAKPKG…KPQGKKTKFE (71 aa)) are disordered. K648 carries the N6-acetyllysine modification. Over residues 652-698 (EGGFGGRGGGRGGFGGRGGGRGGRGGFGGRGRGGFGGRGGFRGGRGG) the composition is skewed to gly residues. Asymmetric dimethylarginine occurs at positions 658, 662, 668, 672, 675, 681, 683, 689, and 693. An Asymmetric dimethylarginine; alternate modification is found at R696. R696 carries the post-translational modification Omega-N-methylarginine; alternate. Residues 699 to 712 (GGDHKPQGKKTKFE) are compositionally biased toward basic and acidic residues.

Identified in a IGF2BP1-dependent mRNP granule complex containing untranslated mRNAs. Component of the SWAP complex that consists of NPM1, NCL/nucleolin, PARP1 and SWAP70. Component of a complex which is at least composed of HTATSF1/Tat-SF1, the P-TEFb complex components CDK9 and CCNT1, RNA polymerase II, SUPT5H, and NCL/nucleolin. Interacts with AICDA. Interacts with APTX. Interacts with C1QBP. Interacts with ERBB4. Interacts (via C-terminus) with FMR1 isoform 6 (via N-terminus). Interacts with GZF1; this interaction is important for nucleolar localization of GZF1. Interacts with NSUN2. Interacts with NVL. Interacts (via N-terminus domain) with SETX. Interacts (via RRM1 and C-terminal RRM4/Arg/Gly-rich domains) with TERT; the interaction is important for nucleolar localization of TERT. Interacts with WDR46. Interacts with ZFP36. Interacts with LRRC34. Interacts with RRP1B. Interacts with HNRNPU; this interaction occurs during mitosis. Interacts with RIOK1; RIOK1 recruits NCL to the PRMT5 for symmetrically methylation. Interacts with ZBTB7B. Interacts with MDK; this interaction promotes NCL clustering and lateral movements of this complex into lipid rafts leading to MDK internalization. Interacts with HDGF. Interacts with ALKBH2. Interacts with IGFBP5; this interaction is necessary for IGFBP5 localization to the nucleus. Interacts with DDX24 (when ubiquitinated); this interaction may be important during ribosome biogenesis. In terms of processing, some glutamate residues are glycylated by TTLL8. This modification occurs exclusively on glutamate residues and results in a glycine chain on the gamma-carboxyl group. Symmetrically methylated by PRMT5.

It is found in the nucleus. Its subcellular location is the nucleolus. The protein localises to the cytoplasm. Functionally, nucleolin is the major nucleolar protein of growing eukaryotic cells. It is found associated with intranucleolar chromatin and pre-ribosomal particles. It induces chromatin decondensation by binding to histone H1. It is thought to play a role in pre-rRNA transcription and ribosome assembly. May play a role in the process of transcriptional elongation. Binds RNA oligonucleotides with 5'-UUAGGG-3' repeats more tightly than the telomeric single-stranded DNA 5'-TTAGGG-3' repeats. In Pongo abelii (Sumatran orangutan), this protein is Nucleolin (NCL).